The chain runs to 215 residues: uncharacterized protein (215 aa).

It to T.pallidum TP_0127, TP_0618 and TP_0619.

This is an uncharacterized protein from Treponema pallidum (strain Nichols).